The following is a 344-amino-acid chain: GTPase Obg (344 aa).

The 159-residue stretch at 1-159 (MKFLDQAKVY…RWIWLRLKLI (159 aa)) folds into the Obg domain. The OBG-type G domain maps to 160 to 327 (ADAGLVGLPN…ALRLLLSVVE (168 aa)). Residues 166 to 173 (GLPNAGKS), 191 to 195 (FTTLH), 212 to 215 (DIPG), 279 to 282 (SKVD), and 308 to 310 (SAQ) contribute to the GTP site. 2 residues coordinate Mg(2+): serine 173 and threonine 193.

It belongs to the TRAFAC class OBG-HflX-like GTPase superfamily. OBG GTPase family. As to quaternary structure, monomer. Mg(2+) serves as cofactor.

The protein resides in the cytoplasm. An essential GTPase which binds GTP, GDP and possibly (p)ppGpp with moderate affinity, with high nucleotide exchange rates and a fairly low GTP hydrolysis rate. Plays a role in control of the cell cycle, stress response, ribosome biogenesis and in those bacteria that undergo differentiation, in morphogenesis control. The chain is GTPase Obg from Xanthobacter autotrophicus (strain ATCC BAA-1158 / Py2).